The primary structure comprises 386 residues: MSAATVGKPIKCIAAVAYDAKKPLSVEEITVDAPKAHEVRIKIEYTAVCHTDAYTLSGSDPEGLFPCVLGHEGAGIVESVGDDVITVKPGDHVIALYTAECGKCKFCTSGKTNLCGAVRATQGKGVMPDGTTRFHNAKGEDIYHFMGCSTFSEYTVVADVSVVAIDPKAPLDAACLLGCGVTTGFGAALKTANVQKGDTVAVFGCGTVGLSVIQGAKLRGASKIIAIDINNKKKQYCSQFGATDFVNPKEDLAKDQTIVEKLIEMTDGGLDFTFDCTGNTKIMRDALEACHKGWGQSIIIGVAAAGEEISTRPFQLVTGRVWKGSAFGGIKGRSEMGGLIKDYQKGALKVEEFITHRRPFKEINQAFEDLHNGDCLRTVLKSDEIK.

N-acetylserine is present on serine 2. Cysteine 49 serves as a coordination point for Zn(2+). Histidine 50 contacts NAD(+). Zn(2+) contacts are provided by histidine 71, glutamate 72, cysteine 101, cysteine 104, cysteine 107, cysteine 115, and cysteine 179. Residues 204 to 209 (GCGTVG), aspartate 228, 300 to 302 (IGV), and 325 to 327 (SAF) contribute to the NAD(+) site.

This sequence belongs to the zinc-containing alcohol dehydrogenase family. Class-III subfamily. Zn(2+) is required as a cofactor.

The protein resides in the cytoplasm. It localises to the mitochondrion. The catalysed reaction is a primary alcohol + NAD(+) = an aldehyde + NADH + H(+). It carries out the reaction a secondary alcohol + NAD(+) = a ketone + NADH + H(+). It catalyses the reaction S-(hydroxymethyl)glutathione + NADP(+) = S-formylglutathione + NADPH + H(+). The enzyme catalyses S-(hydroxymethyl)glutathione + NAD(+) = S-formylglutathione + NADH + H(+). The catalysed reaction is S-nitrosoglutathione + NADH + H(+) = S-(hydroxysulfenamide)glutathione + NAD(+). Its function is as follows. Oxidizes long-chain alcohols and, in the presence of glutathione, is able to oxidize formaldehyde. Is responsible for yeast resistance to formaldehyde. Also acts as a S-nitroso-glutathione reductase by catalyzing the NADH-dependent reduction of S-nitrosoglutathione, thereby regulating protein S-nitrosylation. The chain is S-(hydroxymethyl)glutathione dehydrogenase (SFA1) from Saccharomyces cerevisiae (strain ATCC 204508 / S288c) (Baker's yeast).